A 786-amino-acid chain; its full sequence is Ribosome biogenesis protein BOP1 homolog (786 aa).

The segment covering Met-1–Val-11 has biased composition (basic residues). The segment at Met-1 to Ile-161 is disordered. Acidic residues-rich tracts occupy residues Asp-28–Leu-37, Glu-46–Asp-55, Ser-62–Gly-74, and Ser-86–Ala-103. A compositionally biased stretch (basic and acidic residues) spans Asp-104 to Asp-113. The span at Ala-151–Asp-160 shows a compositional bias: acidic residues. WD repeat units lie at residues Gly-447–Glu-488, Glu-490–Val-528, Thr-572–Pro-614, Lys-617–Lys-655, Thr-658–Gln-697, Leu-701–Gln-740, and Arg-756–Thr-786.

It belongs to the WD repeat BOP1/ERB1 family.

Its subcellular location is the nucleus. It is found in the nucleolus. The protein localises to the nucleoplasm. Required for maturation of ribosomal RNAs and formation of the large ribosomal subunit. This Drosophila pseudoobscura pseudoobscura (Fruit fly) protein is Ribosome biogenesis protein BOP1 homolog.